A 132-amino-acid chain; its full sequence is Small ribosomal subunit protein uS11 (132 aa).

This sequence belongs to the universal ribosomal protein uS11 family. In terms of assembly, part of the 30S ribosomal subunit.

In terms of biological role, located on the platform of the 30S subunit. The sequence is that of Small ribosomal subunit protein uS11 from Sulfolobus acidocaldarius (strain ATCC 33909 / DSM 639 / JCM 8929 / NBRC 15157 / NCIMB 11770).